Here is a 490-residue protein sequence, read N- to C-terminus: UDP-N-acetylmuramoyl-L-alanyl-D-glutamate--2,6-diaminopimelate ligase (490 aa).

UDP-N-acetyl-alpha-D-muramoyl-L-alanyl-D-glutamate-binding positions include L22, S24, and 39 to 41 (HQT). 111–117 (GTNGKTT) is a binding site for ATP. UDP-N-acetyl-alpha-D-muramoyl-L-alanyl-D-glutamate-binding positions include N152, 153–154 (TT), S180, Q186, and R188. N6-carboxylysine is present on K220. Meso-2,6-diaminopimelate-binding positions include R385, 409–412 (DNPR), G460, and E464. The Meso-diaminopimelate recognition motif motif lies at 409–412 (DNPR).

It belongs to the MurCDEF family. MurE subfamily. The cofactor is Mg(2+). Post-translationally, carboxylation is probably crucial for Mg(2+) binding and, consequently, for the gamma-phosphate positioning of ATP.

Its subcellular location is the cytoplasm. It catalyses the reaction UDP-N-acetyl-alpha-D-muramoyl-L-alanyl-D-glutamate + meso-2,6-diaminopimelate + ATP = UDP-N-acetyl-alpha-D-muramoyl-L-alanyl-gamma-D-glutamyl-meso-2,6-diaminopimelate + ADP + phosphate + H(+). It participates in cell wall biogenesis; peptidoglycan biosynthesis. Its function is as follows. Catalyzes the addition of meso-diaminopimelic acid to the nucleotide precursor UDP-N-acetylmuramoyl-L-alanyl-D-glutamate (UMAG) in the biosynthesis of bacterial cell-wall peptidoglycan. This chain is UDP-N-acetylmuramoyl-L-alanyl-D-glutamate--2,6-diaminopimelate ligase, found in Yersinia pestis.